Consider the following 94-residue polypeptide: Protein RnfH (94 aa).

It belongs to the UPF0125 (RnfH) family.

In Sodalis glossinidius (strain morsitans), this protein is Protein RnfH.